Here is an 84-residue protein sequence, read N- to C-terminus: ICP35 (84 aa).

This Crustacea (WSSV) protein is ICP35.